The sequence spans 308 residues: GTP-binding protein RAD (308 aa).

Over residues 1–15 (MTLNGGSGASGSRGA) the composition is skewed to gly residues. The disordered stretch occupies residues 1-86 (MTLNGGSGAS…SDSLSSGGSG (86 aa)). Arg-24 is modified (omega-N-methylarginine). Ser-26 carries the post-translational modification Phosphoserine. Low complexity predominate over residues 57-82 (ATTAAGTRTQGQRLDWPEGSSDSLSS). GTP is bound by residues 98 to 105 (GAPGVGKS) and 203 to 206 (NKSD). A calmodulin-binding region spans residues 278-297 (AKRFLGRIVARNSRKMAFRA).

Belongs to the small GTPase superfamily. RGK family. In terms of assembly, interacts with Calmodulin preferentially in the inactive, GDP-bound form. Interacts with CAMK2D. Interacts with CACNB2; interaction may be involved in beta-adrenergic regulation of heart rate and contractile force. Interaction with CACNB2 regulates the trafficking of CACNA1C to the cell membrane. In terms of processing, phosphorylation at Ser-26, Ser-39, Ser-273 and Ser-301 may be involved in regulating inhibition of voltage-gated L-type Ca(2+) channels.

The protein resides in the cell membrane. May regulate basal voltage-dependent L-type Ca(2+) currents and be required for beta-adrenergic augmentation of Ca(2+) influx in cardiomyocytes, thereby regulating increases in heart rate and contractile force. May play an important role in cardiac antiarrhythmia via the strong suppression of voltage-dependent L-type Ca(2+) currents. Regulates voltage-gated L-type calcium channel subunit alpha-1C trafficking to the cell membrane. Inhibits cardiac hypertrophy through the calmodulin-dependent kinase II (CaMKII) pathway. Inhibits phosphorylation and activation of CAMK2D. The protein is GTP-binding protein RAD (Rrad) of Mus musculus (Mouse).